The primary structure comprises 178 residues: ATP synthase subunit delta (178 aa).

It belongs to the ATPase delta chain family. F-type ATPases have 2 components, F(1) - the catalytic core - and F(0) - the membrane proton channel. F(1) has five subunits: alpha(3), beta(3), gamma(1), delta(1), epsilon(1). F(0) has three main subunits: a(1), b(2) and c(10-14). The alpha and beta chains form an alternating ring which encloses part of the gamma chain. F(1) is attached to F(0) by a central stalk formed by the gamma and epsilon chains, while a peripheral stalk is formed by the delta and b chains.

Its subcellular location is the cell inner membrane. Its function is as follows. F(1)F(0) ATP synthase produces ATP from ADP in the presence of a proton or sodium gradient. F-type ATPases consist of two structural domains, F(1) containing the extramembraneous catalytic core and F(0) containing the membrane proton channel, linked together by a central stalk and a peripheral stalk. During catalysis, ATP synthesis in the catalytic domain of F(1) is coupled via a rotary mechanism of the central stalk subunits to proton translocation. This protein is part of the stalk that links CF(0) to CF(1). It either transmits conformational changes from CF(0) to CF(1) or is implicated in proton conduction. This chain is ATP synthase subunit delta, found in Pseudomonas aeruginosa (strain UCBPP-PA14).